The sequence spans 236 residues: Endonuclease V (236 aa).

Residues aspartate 47 and aspartate 115 each contribute to the Mg(2+) site.

It belongs to the endonuclease V family. Mg(2+) serves as cofactor.

The protein localises to the cytoplasm. It catalyses the reaction Endonucleolytic cleavage at apurinic or apyrimidinic sites to products with a 5'-phosphate.. DNA repair enzyme involved in the repair of deaminated bases. Selectively cleaves double-stranded DNA at the second phosphodiester bond 3' to a deoxyinosine leaving behind the intact lesion on the nicked DNA. The sequence is that of Endonuclease V from Xanthomonas campestris pv. campestris (strain B100).